The following is a 156-amino-acid chain: Small ribosomal subunit protein uS7 (156 aa).

It belongs to the universal ribosomal protein uS7 family. In terms of assembly, part of the 30S ribosomal subunit. Contacts proteins S9 and S11.

One of the primary rRNA binding proteins, it binds directly to 16S rRNA where it nucleates assembly of the head domain of the 30S subunit. Is located at the subunit interface close to the decoding center, probably blocks exit of the E-site tRNA. In Anaeromyxobacter dehalogenans (strain 2CP-C), this protein is Small ribosomal subunit protein uS7.